The following is a 70-amino-acid chain: UPF0352 protein Sden_2336 (70 aa).

It belongs to the UPF0352 family.

The chain is UPF0352 protein Sden_2336 from Shewanella denitrificans (strain OS217 / ATCC BAA-1090 / DSM 15013).